The primary structure comprises 1354 residues: MPAYFQRPENALKRANEFLEVGKKQPALDVLYDVMKSKKHRTWQKIHEPIMLKYLELCVDLRKSHLAKEGLYQYKNICQQVNIKSLEDVVRAYLKLAEEKTEAAKEESQQMVLDIEDLDNIQTPESVLLSAVSGEDTQDRTDRLLLTPWVKFLWESYRQCLDLLRNNSRVERLYHDIAQQAFKFCLQYTRKAEFRKLCDNLRMHLSQIQRHHNQSTAINLNNPESQSMHLETRLVQLDSAISMELWQEAFKAVEDIHGLFSLSKKPPKPQLMANYYNKVSTVFWKSGNALFHASTLHRLYHLSREMRKNLTQDEMQRMSTRVLLATLSIPITPERTDIARLLDMDGIIVEKQRRLATLLGLQAPPTRIGLINDMVRFNVLQYVVPEVKDLYNWLEVEFNPLKLCERVTKVLNWVREQPEKEPELQQYVPQLQNNTILRLLQQVAQIYQSIEFSRLTSLVPFVDAFQLERAIVDAARHCDLQVRIDHTSRTLSFGSDLNYATREDAPIGPHLQSMPSEQIRNQLTAMSSVLAKALEVIKPAHILQEKEEQHQLAVTAYIKNSRKEHQRILARRQTIEERKERLESLNIQREKEELEQREAELQKVRKAEEERLRQEAKEREKERILQEHEQIKKKTVRERLEQIKKTELGAKAFKDIDIEDLEELDPDFIMAKQVEQLEKEKKELQERLKNQEKKIDYFERAKRLEEIPLIKSAYEEQRVKDMDLWEQQEEERITTMQLEREKALEHKNRMSRMLEDRDLFVMRLKAARQSVYEEKLKQFEERLAEERHNRLEERKRQRKEERKITYYREKEEEEQRRAEEQMLKEREERERAERAKREEELREYQERVKKLEEVERKKRQRELEIEERERRREEERRLGEDPLSRKDSRWGDRDSEGTWRKGPEADSEWRRGPPEKEWRRETRDDERPHRRDEDRLRRLGGDDEERESSLRPDDDRIPRRGLDDDRGPRRGPDEDRFSRRGTDDDRPSWRNADDDRPPRRIGDDDRGSWRHTDDDRPPRRGLDDDRPPRRGLDDERGSWRTAEEDRGPRRGMDDDRGPRRGGADDERSSWRNADDDRGPRRGMDDDRGPRRGLDDDRGPWRNAAEDRISRRGADDDRGPWRNMDDDRVPRRGDDARPGPWRPFVKPGGWREKEKAREESWGPPRESRPPEEREWDRDKEKDRDNQDREENDKDLERDRDRERDGDREDRFRRPRDEGGWRRGPAEESSSWRDSSRRDDRDRDDRRRDRDDRRDLRDLRDRRDLRDDRDRRGPPLRSEREEASSWRRTDDRKDDRTEERDPPRRVPPPTLSRERERERDREGEKEKASWRAEKDRESLRRTKNETDEDGWTTVRR.

N6-acetyllysine is present on lysine 68. A coiled-coil region spans residues 82–120 (NIKSLEDVVRAYLKLAEEKTEAAKEESQQMVLDIEDLDN). The PCI domain occupies 315–498 (MQRMSTRVLL…RTLSFGSDLN (184 aa)). A phosphoserine mark is found at serine 492 and serine 584. Residues 664-835 (LDPDFIMAKQ…REERERAERA (172 aa)) form an interaction with EIF3B region. Disordered stretches follow at residues 809–844 (EKEEEEQRRAEEQMLKEREERERAERAKREEELREY), 866–1249 (EERE…RDRD), and 1262–1354 (DLRD…TVRR). 4 stretches are compositionally biased toward basic and acidic residues: residues 866-1136 (EERE…DDAR), 1148-1249 (GWRE…RDRD), 1262-1302 (DLRD…DPPR), and 1310-1343 (SRERERERDREGEKEKASWRAEKDRESLRRTKNE). Residue serine 895 is modified to Phosphoserine. A 1; truncated repeat occupies 924–931 (DDERPHRR). The segment at 924–1143 (DDERPHRRDE…DARPGPWRPF (220 aa)) is 22 X 10 AA approximate tandem repeats of [DA]-[DE]-[ED]-R-[PLIGFSV]-[RPS]-[RW]-[RL]-[GNIHT]-[DGLPTAM]. Copy 2 of the repeat occupies 932-941 (DEDRLRRLGG). One copy of the 3; approximate repeat lies at 942 to 951 (DDEERESSLR). The residue at position 949 (serine 949) is a Phosphoserine. 18 consecutive repeat copies span residues 953-962 (DDDRIPRRGL), 963-972 (DDDRGPRRGP), 973-982 (DEDRFSRRGT), 983-992 (DDDRPSWRNA), 993-1002 (DDDRPPRRIG), 1003-1012 (DDDRGSWRHT), 1013-1022 (DDDRPPRRGL), 1023-1032 (DDDRPPRRGL), 1033-1042 (DDERGSWRTA), 1043-1052 (EEDRGPRRGM), 1053-1062 (DDDRGPRRGG), 1064-1073 (DDERSSWRNA), 1074-1083 (DDDRGPRRGM), 1084-1093 (DDDRGPRRGL), 1094-1103 (DDDRGPWRNA), 1104-1113 (AEDRISRRGA), 1114-1123 (DDDRGPWRNM), and 1124-1133 (DDDRVPRRGD). Position 1038 is a phosphoserine (serine 1038). The stretch at 1134-1143 (DARPGPWRPF) is one 22; approximate repeat. Serine 1159 and serine 1233 each carry phosphoserine. 2 positions are modified to phosphoserine: serine 1310 and serine 1336.

The protein belongs to the eIF-3 subunit A family. Component of the eukaryotic translation initiation factor 3 (eIF-3) complex, which is composed of 13 subunits: EIF3A, EIF3B, EIF3C, EIF3D, EIF3E, EIF3F, EIF3G, EIF3H, EIF3I, EIF3J, EIF3K, EIF3L and EIF3M. The eIF-3 complex appears to include 3 stable modules: module A is composed of EIF3A, EIF3B, EIF3G and EIF3I; module B is composed of EIF3F, EIF3H, and EIF3M; and module C is composed of EIF3C, EIF3D, EIF3E, EIF3L and EIF3K. EIF3C of module C binds EIF3B of module A and EIF3H of module B, thereby linking the three modules. EIF3J is a labile subunit that binds to the eIF-3 complex via EIF3B. The eIF-3 complex interacts with RPS6KB1 under conditions of nutrient depletion. Mitogenic stimulation leads to binding and activation of a complex composed of MTOR and RPTOR, leading to phosphorylation and release of RPS6KB1 and binding of EIF4B to eIF-3. Interacts with EIF4G1. Also interacts with KRT7 and PIWIL2. In terms of processing, phosphorylated. Phosphorylation is enhanced upon serum stimulation.

Its subcellular location is the cytoplasm. Functionally, RNA-binding component of the eukaryotic translation initiation factor 3 (eIF-3) complex, which is required for several steps in the initiation of protein synthesis. The eIF-3 complex associates with the 40S ribosome and facilitates the recruitment of eIF-1, eIF-1A, eIF-2:GTP:methionyl-tRNAi and eIF-5 to form the 43S pre-initiation complex (43S PIC). The eIF-3 complex stimulates mRNA recruitment to the 43S PIC and scanning of the mRNA for AUG recognition. The eIF-3 complex is also required for disassembly and recycling of post-termination ribosomal complexes and subsequently prevents premature joining of the 40S and 60S ribosomal subunits prior to initiation. The eIF-3 complex specifically targets and initiates translation of a subset of mRNAs involved in cell proliferation, including cell cycling, differentiation and apoptosis, and uses different modes of RNA stem-loop binding to exert either translational activation or repression. The protein is Eukaryotic translation initiation factor 3 subunit A (Eif3a) of Rattus norvegicus (Rat).